The sequence spans 1113 residues: Poly(A) RNA polymerase gld-2 (1113 aa).

Disordered regions lie at residues methionine 1–histidine 113, arginine 134–proline 175, leucine 205–proline 266, and leucine 445–threonine 513. Residues serine 22 to serine 52 are compositionally biased toward low complexity. Polar residues predominate over residues serine 60–glutamine 106. The span at arginine 149–proline 172 shows a compositional bias: low complexity. A compositionally biased stretch (pro residues) spans tyrosine 223 to threonine 233. Positions glycine 451–arginine 485 are enriched in basic and acidic residues. Residues serine 492–serine 507 show a composition bias toward low complexity. 2 residues coordinate Mg(2+): aspartate 606 and aspartate 608. The 37-residue stretch at threonine 780 to leucine 816 folds into the PAP-associated domain. 2 disordered regions span residues alanine 817–methionine 854 and glycine 966–glutamine 1113. The span at tyrosine 972–methionine 994 shows a compositional bias: polar residues. 2 stretches are compositionally biased toward low complexity: residues asparagine 995 to asparagine 1035 and glutamine 1044 to valine 1061. The segment covering valine 1069–arginine 1084 has biased composition (basic and acidic residues).

The protein belongs to the DNA polymerase type-B-like family. GLD2 subfamily. Interacts with gld-3. It depends on Mg(2+) as a cofactor. Requires Mn(2+) as cofactor. As to expression, germline-specific.

The protein resides in the cytoplasm. It carries out the reaction RNA(n) + ATP = RNA(n)-3'-adenine ribonucleotide + diphosphate. Functionally, cytoplasmic poly(A) RNA polymerase that adds successive AMP monomers to the 3'-end of specific RNAs, forming a poly(A) tail. Acts as a regulator of mitosis/meiosis required for progression through meiotic prophase during oogenesis and spermatogenesis and for promotion of the entry into meiosis from the mitotic cell cycle. May act by regulating and activating gld-1 mRNA activity in germline. Required for polyadenylation of neg-1 mRNA during embryogenesis. In Caenorhabditis elegans, this protein is Poly(A) RNA polymerase gld-2 (gld-2).